A 342-amino-acid polypeptide reads, in one-letter code: DNA-directed RNA polymerase subunit alpha (342 aa).

The interval 1–239 (MTTFLAKNWS…DQLQVFINFQ (239 aa)) is alpha N-terminal domain (alpha-NTD). Positions 254-342 (INPVLLKKVY…SLAKKHEDQY (89 aa)) are alpha C-terminal domain (alpha-CTD).

Belongs to the RNA polymerase alpha chain family. Homodimer. The RNAP catalytic core consists of 2 alpha, 1 beta, 1 beta' and 1 omega subunit. When a sigma factor is associated with the core the holoenzyme is formed, which can initiate transcription.

It catalyses the reaction RNA(n) + a ribonucleoside 5'-triphosphate = RNA(n+1) + diphosphate. DNA-dependent RNA polymerase catalyzes the transcription of DNA into RNA using the four ribonucleoside triphosphates as substrates. The sequence is that of DNA-directed RNA polymerase subunit alpha from Orientia tsutsugamushi (strain Boryong) (Rickettsia tsutsugamushi).